A 434-amino-acid polypeptide reads, in one-letter code: Protein maelstrom homolog (434 aa).

Residues 4-73 (RRGSRNAYYF…AQGKDAGPWE (70 aa)) constitute a DNA-binding region (HMG box). A disordered region spans residues 357–387 (SHFSSSNQEQRSNTPTGDYPSGVKISGQSSS). Residues 363–372 (NQEQRSNTPT) are compositionally biased toward polar residues.

The protein belongs to the maelstrom family. In terms of assembly, interacts with SMARCB1, SIN3B and DDX4. Interacts with piRNA-associated proteins TDRD1, PIWIL1 and PIWIL2. Interacts with TEX19.

It is found in the cytoplasm. The protein localises to the nucleus. In terms of biological role, plays a central role during spermatogenesis by repressing transposable elements and preventing their mobilization, which is essential for the germline integrity. Acts via the piRNA metabolic process, which mediates the repression of transposable elements during meiosis by forming complexes composed of piRNAs and Piwi proteins and governs the methylation and subsequent repression of transposons. Its association with piP-bodies suggests a participation in the secondary piRNAs metabolic process. Required for the localization of germ-cell factors to the meiotic nuage. The polypeptide is Protein maelstrom homolog (MAEL) (Sus scrofa (Pig)).